Reading from the N-terminus, the 235-residue chain is Carboxy-S-adenosyl-L-methionine synthase (235 aa).

Residues Y35, 60 to 62 (GCS), 83 to 84 (DN), N124, and R191 each bind S-adenosyl-L-methionine.

This sequence belongs to the class I-like SAM-binding methyltransferase superfamily. Cx-SAM synthase family. As to quaternary structure, homodimer.

It catalyses the reaction prephenate + S-adenosyl-L-methionine = carboxy-S-adenosyl-L-methionine + 3-phenylpyruvate + H2O. Catalyzes the conversion of S-adenosyl-L-methionine (SAM) to carboxy-S-adenosyl-L-methionine (Cx-SAM). In Campylobacter jejuni subsp. jejuni serotype O:2 (strain ATCC 700819 / NCTC 11168), this protein is Carboxy-S-adenosyl-L-methionine synthase.